We begin with the raw amino-acid sequence, 535 residues long: Calcium-dependent protein kinase 7 (535 aa).

The segment at 1–29 (MGNCCGNPSSATNQSKQGKPKNKNNPFYS) is disordered. The N-myristoyl glycine moiety is linked to residue Gly-2. The Protein kinase domain occupies 59–317 (YDLGREVGRG…AAQVLEHTWI (259 aa)). Residues 65 to 73 (VGRGEFGIT) and Lys-88 contribute to the ATP site. The active-site Proton acceptor is the Asp-183. Phosphoserine is present on Ser-223. The interval 323–353 (APNVSLGETVKARLKQFSVMNKLKKRALRVI) is autoinhibitory domain. 4 EF-hand domains span residues 360–395 (EEAA…AGQQ), 396–431 (IADT…LKKM), 432–467 (ANDE…ELDN), and 468–504 (TSSE…GTDW). 18 residues coordinate Ca(2+): Asp-373, Asn-375, Lys-379, Glu-384, Asp-409, Asp-411, Asp-413, Thr-415, Glu-420, Asp-445, Asn-447, Ser-449, Tyr-451, Glu-456, Asp-482, Asp-484, Asp-486, and Arg-488. A Phosphoserine modification is found at Ser-490. Glu-493 is a binding site for Ca(2+).

Belongs to the protein kinase superfamily. Ser/Thr protein kinase family. CDPK subfamily.

Its subcellular location is the cell membrane. The catalysed reaction is L-seryl-[protein] + ATP = O-phospho-L-seryl-[protein] + ADP + H(+). It catalyses the reaction L-threonyl-[protein] + ATP = O-phospho-L-threonyl-[protein] + ADP + H(+). Its activity is regulated as follows. Activated by calcium. Autophosphorylation may play an important role in the regulation of the kinase activity. Its function is as follows. May play a role in signal transduction pathways that involve calcium as a second messenger. This Arabidopsis thaliana (Mouse-ear cress) protein is Calcium-dependent protein kinase 7 (CPK7).